A 206-amino-acid chain; its full sequence is Thymidylate kinase (206 aa).

11–18 (GIDGAGKT) lines the ATP pocket.

It belongs to the thymidylate kinase family.

It carries out the reaction dTMP + ATP = dTDP + ADP. Its function is as follows. Phosphorylation of dTMP to form dTDP in both de novo and salvage pathways of dTTP synthesis. This chain is Thymidylate kinase, found in Burkholderia cenocepacia (strain HI2424).